The primary structure comprises 1871 residues: Plexin-A3 (1871 aa).

Residues 1–19 form the signal peptide; it reads MPSVCLLLLLFLAVGGALG. Residues 20-488 enclose the Sema domain; it reads NRPFRAFVVT…SEKQVSQLPV (469 aa). At 20 to 1220 the chain is on the extracellular side; the sequence is NRPFRAFVVT…SAERALTLPA (1201 aa). Residue asparagine 59 is glycosylated (N-linked (GlcNAc...) asparagine). Cystine bridges form between cysteine 77/cysteine 86, cysteine 112/cysteine 120, cysteine 266/cysteine 387, cysteine 282/cysteine 338, cysteine 356/cysteine 375, cysteine 491/cysteine 508, cysteine 497/cysteine 539, cysteine 500/cysteine 517, and cysteine 511/cysteine 523. Asparagine 548 carries an N-linked (GlcNAc...) asparagine glycan. A disulfide bond links cysteine 574 and cysteine 594. N-linked (GlcNAc...) asparagine glycosylation is found at asparagine 637, asparagine 738, and asparagine 746. IPT/TIG domains follow at residues 840–933, 935–1020, 1023–1122, and 1125–1211; these read PRIT…YSFV, PTFD…YTYT, PTVT…FTYY, and PSFE…LHIS. N-linked (GlcNAc...) asparagine glycans are attached at residues asparagine 1009, asparagine 1036, asparagine 1073, asparagine 1115, and asparagine 1162. A helical membrane pass occupies residues 1221 to 1241; the sequence is MMGLAAGGGLLLLAITAVLVA. The Cytoplasmic segment spans residues 1242 to 1871; the sequence is YKRKTQDADR…QIISLVSSDS (630 aa). Serine 1596 carries the post-translational modification Phosphoserine.

Belongs to the plexin family. As to quaternary structure, interacts with CBFA2T3/MTG16.

The protein localises to the cell membrane. Its function is as follows. Coreceptor for SEMA3A and SEMA3F. Necessary for signaling by class 3 semaphorins and subsequent remodeling of the cytoskeleton. Plays a role in axon guidance in the developing nervous system. Regulates the migration of sympathetic neurons, but not of neural crest precursors. Required for normal dendrite spine morphology in pyramidal neurons. May play a role in regulating semaphorin-mediated programmed cell death in the developing nervous system. Class 3 semaphorins bind to a complex composed of a neuropilin and a plexin. The plexin modulates the affinity of the complex for specific semaphorins, and its cytoplasmic domain is required for the activation of down-stream signaling events in the cytoplasm. The polypeptide is Plexin-A3 (PLXNA3) (Homo sapiens (Human)).